The following is a 1048-amino-acid chain: Transcription factor mef2A (1048 aa).

In terms of domain architecture, MADS-box spans 1–61 (MGRNKITIEK…NKLFQYSSRD (61 aa)). Residues 74–85 (DNTRKNLTNQDY) are compositionally biased toward polar residues. Disordered stretches follow at residues 74–263 (DNTR…QAAQ), 294–339 (QQQH…QQQQ), 386–812 (GIYG…NINT), and 916–1048 (LLLT…EPKN). The span at 97-110 (DDEDGDDDGDEDLG) shows a compositional bias: acidic residues. 7 stretches are compositionally biased toward low complexity: residues 130–205 (NNNN…NANH), 212–263 (GNSA…QAAQ), 294–303 (QQQHQQQQQN), 327–339 (QQQQQMQHSQQQQ), 393–437 (PPQM…IMNK), 446–466 (YYDYNGYPQQQQPPQNYNSNG), and 481–500 (QQQSANPYIQQQQQPQHQSP). A coiled-coil region spans residues 249-304 (NNNSNGYQQQQQAAQQAVQQAQMAQQMHLQQQQQYQQLQHIQQQQQQQHQQQQQNM). Residues 506–522 (YSPQQQSPVLNSQNGHH) are compositionally biased toward polar residues. Residues 529–539 (HQMHHQQHQHQ) are compositionally biased toward basic residues. Positions 540–593 (QHPQMQQQQQQQQQHQQHPQMQQIQQQQHPQMQQHQQHQQQHPQMQQQHMNNHQ) are enriched in low complexity. Polar residues predominate over residues 600–618 (NSSPEINSQKNVHSSPLIM). The span at 619-699 (NSNNNNNNNN…NSNNGNNNNN (81 aa)) shows a compositional bias: low complexity. Positions 715-736 (SSPTIPEQPSINVSTSSNSAHV) are enriched in polar residues. Composition is skewed to low complexity over residues 738–802 (NNIT…SSST), 924–960 (SNNSNSSNNNNNNNNNNNNTNNNNISGNGSSSSSSSS), and 982–1029 (NNNN…NNSN).

Its subcellular location is the nucleus. Functionally, transcription factor that regulates cell differentiation during development. Seems to negatively regulate prestalk gene expression and positively regulate prespore gene expression. The sequence is that of Transcription factor mef2A (mef2A) from Dictyostelium discoideum (Social amoeba).